The primary structure comprises 310 residues: Acetylglutamate kinase (310 aa).

Residues 79 to 80, Arg101, and Asn206 each bind substrate; that span reads GG.

The protein belongs to the acetylglutamate kinase family. ArgB subfamily.

The protein resides in the cytoplasm. It catalyses the reaction N-acetyl-L-glutamate + ATP = N-acetyl-L-glutamyl 5-phosphate + ADP. It functions in the pathway amino-acid biosynthesis; L-arginine biosynthesis; N(2)-acetyl-L-ornithine from L-glutamate: step 2/4. Catalyzes the ATP-dependent phosphorylation of N-acetyl-L-glutamate. The protein is Acetylglutamate kinase of Rhodospirillum rubrum (strain ATCC 11170 / ATH 1.1.1 / DSM 467 / LMG 4362 / NCIMB 8255 / S1).